Reading from the N-terminus, the 166-residue chain is Small ribosomal subunit protein uS5 (166 aa).

Residues 12-75 (YIEKLVQVNR…EAARRNMIQV (64 aa)) enclose the S5 DRBM domain.

It belongs to the universal ribosomal protein uS5 family. As to quaternary structure, part of the 30S ribosomal subunit. Contacts proteins S4 and S8.

With S4 and S12 plays an important role in translational accuracy. Functionally, located at the back of the 30S subunit body where it stabilizes the conformation of the head with respect to the body. This chain is Small ribosomal subunit protein uS5, found in Pseudomonas entomophila (strain L48).